The following is a 138-amino-acid chain: Class I hydrophobin 3 (138 aa).

Residues 1–16 form the signal peptide; that stretch reads MRFFLAITALVAAVTA. 4 disulfides stabilise this stretch: cysteine 40-cysteine 111, cysteine 48-cysteine 105, cysteine 49-cysteine 87, and cysteine 112-cysteine 130.

Belongs to the fungal hydrophobin family. In terms of assembly, self-assembles to form functional amyloid fibrils called rodlets. Self-assembly into fibrillar rodlets occurs spontaneously at hydrophobic:hydrophilic interfaces and the rodlets further associate laterally to form amphipathic monolayers.

Its subcellular location is the secreted. It localises to the cell wall. Its function is as follows. Aerial growth, conidiation, and dispersal of filamentous fungi in the environment rely upon a capability of their secreting small amphipathic proteins called hydrophobins (HPBs) with low sequence identity. Class I can self-assemble into an outermost layer of rodlet bundles on aerial cell surfaces, conferring cellular hydrophobicity that supports fungal growth, development and dispersal; whereas Class II form highly ordered films at water-air interfaces through intermolecular interactions but contribute nothing to the rodlet structure. HYD3 is a class I hydrophobin that contributes to the formation of aerial hyphae and fruiting bodies. This is Class I hydrophobin 3 from Cordyceps militaris (Caterpillar fungus).